Here is a 151-residue protein sequence, read N- to C-terminus: Cytochrome c oxidase-assembly factor COX23, mitochondrial (151 aa).

The N-terminal 10 residues, methionine 1 to glutamine 10, are a transit peptide targeting the mitochondrion. Residues methionine 1–proline 86 are disordered. Over residues threonine 7–serine 18 the composition is skewed to polar residues. The span at asparagine 19–proline 51 shows a compositional bias: low complexity. A CHCH domain is found at tyrosine 101–arginine 143. 2 short sequence motifs (cx9C motif) span residues cysteine 104–cysteine 114 and cysteine 125–cysteine 135. 2 disulfides stabilise this stretch: cysteine 104-cysteine 135 and cysteine 114-cysteine 125.

It belongs to the COX23 family.

It is found in the cytoplasm. The protein localises to the mitochondrion intermembrane space. Required for the assembly of cytochrome c oxidase. This chain is Cytochrome c oxidase-assembly factor COX23, mitochondrial (COX23), found in Saccharomyces cerevisiae (strain ATCC 204508 / S288c) (Baker's yeast).